The following is a 448-amino-acid chain: Potassium/proton antiporter CemA (448 aa).

The next 4 helical transmembrane spans lie at 224-244 (ALASIQYIGCLLFILSIISML), 325-345 (IILHLLTDIISIVTLIVLFII), 373-393 (ILLLTDLCIGFHSPHGWEIVI), and 408-428 (IISCFVSTFPVILDTVFKYWI).

It belongs to the CemA family.

It localises to the plastid. Its subcellular location is the chloroplast inner membrane. The catalysed reaction is K(+)(in) + H(+)(out) = K(+)(out) + H(+)(in). Functionally, contributes to K(+)/H(+) antiport activity by supporting proton efflux to control proton extrusion and homeostasis in chloroplasts in a light-dependent manner to modulate photosynthesis. Prevents excessive induction of non-photochemical quenching (NPQ) under continuous-light conditions. Indirectly promotes efficient inorganic carbon uptake into chloroplasts. The polypeptide is Potassium/proton antiporter CemA (Angiopteris evecta (Mule's foot fern)).